Consider the following 250-residue polypeptide: Protein lin-28 homolog B (250 aa).

The interval Met1–Gln26 is disordered. Residues Arg29–Pro102 form the CSD domain. Phosphoserine occurs at positions 54, 96, 105, and 110. A disordered region spans residues Arg98 to Gly126. The Bipartite nuclear localization signal signature appears at Arg112–Lys125. Residues Pro114–Lys125 are compositionally biased toward basic residues. CCHC-type zinc fingers lie at residues Asp127 to Leu144 and Lys149 to His166. Positions 129, 132, 137, 142, 151, 154, 159, and 164 each coordinate Zn(2+). A disordered region spans residues Val169–Thr250. The segment covering Pro173–Leu191 has biased composition (polar residues). Ser203 is subject to Phosphoserine. Residues Ala210–Gly219 are compositionally biased toward basic and acidic residues. Polar residues predominate over residues Arg220 to Ser231. A Nucleolar localization signal motif is present at residues Lys239–Thr250.

Belongs to the lin-28 family. Expressed at high levels in the placenta and, at mucher lower, in testis and fetal liver. Isoform 1 is only detected in placenta and in moderately and poorly differentiated hepatocellular carcinoma cells (at protein level). Isoform 2 is detected in fetal liver, non-tumor liver tissues, as well as well-differentiated tumor tissues (at protein level). Tends to be up-regulated in triple-negative (ER-,PR-,HER2-) breast tumors, as well as in liver, ovarian, and thyroid carcinomas.

The protein localises to the nucleus. It localises to the nucleolus. It is found in the cytoplasm. In terms of biological role, suppressor of microRNA (miRNA) biogenesis, including that of let-7 and possibly of miR107, miR-143 and miR-200c. Binds primary let-7 transcripts (pri-let-7), including pri-let-7g and pri-let-7a-1, and sequester them in the nucleolus, away from the microprocessor complex, hence preventing their processing into mature miRNA. Does not act on pri-miR21. The repression of let-7 expression is required for normal development and contributes to maintain the pluripotent state of embryonic stem cells by preventing let-7-mediated differentiation. When overexpressed, recruits ZCCHC11/TUT4 uridylyltransferase to pre-let-7 transcripts, leading to their terminal uridylation and degradation. This activity might not be relevant in vivo, as LIN28B-mediated inhibition of let-7 miRNA maturation appears to be ZCCHC11-independent. Interaction with target pre-miRNAs occurs via an 5'-GGAG-3' motif in the pre-miRNA terminal loop. Mediates MYC-induced let-7 repression. When overexpressed, isoform 1 stimulates growth of the breast adenocarcinoma cell line MCF-7. Isoform 2 has no effect on cell growth. This Homo sapiens (Human) protein is Protein lin-28 homolog B (LIN28B).